Consider the following 373-residue polypeptide: Mitochondrial fission regulator 2 (373 aa).

Phosphoserine is present on S136. Residues 151–179 adopt a coiled-coil conformation; that stretch reads VSEAAIKKIAALEDELTSLRAQIAAIVAM. Disordered regions lie at residues 189–331 and 346–373; these read GFIS…WDPV and DDSF…GSRF. The segment covering 224-239 has biased composition (pro residues); sequence SPPPLPPPPPPLPPPQ. Composition is skewed to basic and acidic residues over residues 275-287 and 297-310; these read KKTD…ESQR and VLKD…RPVE. Phosphoserine is present on residues S312 and S348. Polar residues predominate over residues 354–373; that stretch reads RSWQGSPFSSPETSRNGSRF.

It belongs to the MTFR1 family.

It is found in the mitochondrion. Functionally, may play a role in mitochondrial aerobic respiration essentially in the testis. Can also promote mitochondrial fission. In Rattus norvegicus (Rat), this protein is Mitochondrial fission regulator 2 (Mtfr2).